The chain runs to 209 residues: Probable chalcone--flavanone isomerase 3 (209 aa).

It belongs to the chalcone isomerase family.

It carries out the reaction a chalcone = a flavanone.. Its pathway is secondary metabolite biosynthesis; flavonoid biosynthesis. Its function is as follows. Involved in anthocyanin biosynthesis. The sequence is that of Probable chalcone--flavanone isomerase 3 (CHI3) from Arabidopsis thaliana (Mouse-ear cress).